Here is a 614-residue protein sequence, read N- to C-terminus: Dolichyl-diphosphooligosaccharide--protein glycosyltransferase subunit 1A (614 aa).

Positions 1 to 25 (MKQSSVVDLLLLLLAIALLATPAFS) are cleaved as a signal peptide. Residues 26–432 (DLVLSKVERR…QVYYKFSNIN (407 aa)) are Lumenal-facing. 2 N-linked (GlcNAc...) asparagine glycosylation sites follow: N94 and N299. K311 participates in a covalent cross-link: Glycyl lysine isopeptide (Lys-Gly) (interchain with G-Cter in ubiquitin). N352 carries an N-linked (GlcNAc...) asparagine glycan. A helical membrane pass occupies residues 433–453 (LLSEPLMLISGFFILFITCII). Residues 454–614 (YTRADISISK…EDLLEFIDEI (161 aa)) lie on the Cytoplasmic side of the membrane.

Belongs to the OST1 family. In terms of assembly, component of the oligosaccharyltransferase (OST) complex.

It is found in the endoplasmic reticulum membrane. It functions in the pathway protein modification; protein glycosylation. Its function is as follows. Subunit of the oligosaccharyl transferase (OST) complex that catalyzes the initial transfer of a defined glycan (Glc(3)Man(9)GlcNAc(2) in eukaryotes) from the lipid carrier dolichol-pyrophosphate to an asparagine residue within an Asn-X-Ser/Thr consensus motif in nascent polypeptide chains, the first step in protein N-glycosylation. N-glycosylation occurs cotranslationally and the complex associates with the Sec61 complex at the channel-forming translocon complex that mediates protein translocation across the endoplasmic reticulum (ER). All subunits are required for a maximal enzyme activity. This Arabidopsis thaliana (Mouse-ear cress) protein is Dolichyl-diphosphooligosaccharide--protein glycosyltransferase subunit 1A (OST1A).